Consider the following 498-residue polypeptide: ATP synthase subunit beta, chloroplastic (498 aa).

ATP is bound at residue Gly-172 to Thr-179.

This sequence belongs to the ATPase alpha/beta chains family. In terms of assembly, F-type ATPases have 2 components, CF(1) - the catalytic core - and CF(0) - the membrane proton channel. CF(1) has five subunits: alpha(3), beta(3), gamma(1), delta(1), epsilon(1). CF(0) has four main subunits: a(1), b(1), b'(1) and c(9-12).

Its subcellular location is the plastid. It is found in the chloroplast thylakoid membrane. The enzyme catalyses ATP + H2O + 4 H(+)(in) = ADP + phosphate + 5 H(+)(out). Produces ATP from ADP in the presence of a proton gradient across the membrane. The catalytic sites are hosted primarily by the beta subunits. This chain is ATP synthase subunit beta, chloroplastic, found in Jasminum nudiflorum (Winter jasmine).